Reading from the N-terminus, the 696-residue chain is D-(-)-3-hydroxybutyrate oligomer hydrolase (696 aa).

The signal sequence occupies residues 1-26; that stretch reads MDTHGWGSRILVGAALAALTMLGACN. Ser-309 functions as the Charge relay system in the catalytic mechanism.

This sequence belongs to the D-(-)-3-hydroxybutyrate oligomer hydrolase family.

The protein localises to the secreted. The enzyme catalyses (3R)-hydroxybutanoate dimer + H2O = 2 (R)-3-hydroxybutanoate + H(+). Its pathway is lipid metabolism; butanoate metabolism. In terms of biological role, participates in the degradation of poly-3-hydroxybutyrate (PHB). It works downstream of poly(3-hydroxybutyrate) depolymerase, hydrolyzing D(-)-3-hydroxybutyrate oligomers of various length (3HB-oligomers) into 3HB-monomers. In Burkholderia vietnamiensis (strain G4 / LMG 22486) (Burkholderia cepacia (strain R1808)), this protein is D-(-)-3-hydroxybutyrate oligomer hydrolase.